The sequence spans 327 residues: Cell surface glycoprotein CD200 receptor 1 (327 aa).

Positions 1-23 (MLCFWRTSHVAVLLIWGVFAAES) are cleaved as a signal peptide. The Extracellular segment spans residues 24 to 239 (SCPDKNQTMQ…GRGGDQLLGS (216 aa)). The Ig-like V-type domain maps to 26–145 (PDKNQTMQNN…GNFQNIYDLQ (120 aa)). Residues Asn29, Asn34, Asn43, Asn96, Asn159, Asn187, Asn192, and Asn222 are each glycosylated (N-linked (GlcNAc...) asparagine). Disulfide bonds link Cys58-Cys129 and Cys81-Cys97. One can recognise an Ig-like C2-type domain in the interval 147 to 226 (LVPPEVTHFP…HLTTGNQSLS (80 aa)). Intrachain disulfides connect Cys164-Cys213 and Cys183-Cys201. The helical transmembrane segment at 240-260 (YIQYIIPSIIILIIIGCICLL) threads the bilayer. At 261–327 (KISGCRKCKL…DCLTLSAMGI (67 aa)) the chain is on the cytoplasmic side.

The protein belongs to the CD200R family. As to quaternary structure, CD200 and CD200R1 interact via their respective N-terminal Ig-like domains. In terms of processing, phosphorylated on tyrosine residues. Highly N-glycosylated. Restricted to cells of the myeloid lineage.

The protein localises to the cell membrane. In terms of biological role, inhibitory receptor for the CD200/OX2 cell surface glycoprotein. Limits inflammation by inhibiting the expression of pro-inflammatory molecules including TNF-alpha, interferons, and inducible nitric oxide synthase (iNOS) in response to selected stimuli. The protein is Cell surface glycoprotein CD200 receptor 1 (Cd200r1) of Rattus norvegicus (Rat).